Consider the following 106-residue polypeptide: MIITTTPSIEGKNILEYKGVVFGEVISGVNFIKDFAAGLSNFFGGRSNTYEGELIEAREKAMKEMENRAIQIGANAVVGVDIDYEVLGADNGMLMVTASGTAVYYE.

This sequence belongs to the UPF0145 family.

This Clostridium botulinum (strain Eklund 17B / Type B) protein is UPF0145 protein CLL_A2504.